A 552-amino-acid polypeptide reads, in one-letter code: Dihydroxy-acid dehydratase (552 aa).

A Mg(2+)-binding site is contributed by Asp-78. Residue Cys-119 participates in [2Fe-2S] cluster binding. Mg(2+) contacts are provided by Asp-120 and Lys-121. Position 121 is an N6-carboxylysine (Lys-121). Cys-191 lines the [2Fe-2S] cluster pocket. A Mg(2+)-binding site is contributed by Glu-442. The active-site Proton acceptor is the Ser-468.

Belongs to the IlvD/Edd family. Homodimer. [2Fe-2S] cluster serves as cofactor. Mg(2+) is required as a cofactor.

It catalyses the reaction (2R)-2,3-dihydroxy-3-methylbutanoate = 3-methyl-2-oxobutanoate + H2O. The catalysed reaction is (2R,3R)-2,3-dihydroxy-3-methylpentanoate = (S)-3-methyl-2-oxopentanoate + H2O. It participates in amino-acid biosynthesis; L-isoleucine biosynthesis; L-isoleucine from 2-oxobutanoate: step 3/4. The protein operates within amino-acid biosynthesis; L-valine biosynthesis; L-valine from pyruvate: step 3/4. In terms of biological role, functions in the biosynthesis of branched-chain amino acids. Catalyzes the dehydration of (2R,3R)-2,3-dihydroxy-3-methylpentanoate (2,3-dihydroxy-3-methylvalerate) into 2-oxo-3-methylpentanoate (2-oxo-3-methylvalerate) and of (2R)-2,3-dihydroxy-3-methylbutanoate (2,3-dihydroxyisovalerate) into 2-oxo-3-methylbutanoate (2-oxoisovalerate), the penultimate precursor to L-isoleucine and L-valine, respectively. This Clostridium botulinum (strain Eklund 17B / Type B) protein is Dihydroxy-acid dehydratase.